A 339-amino-acid polypeptide reads, in one-letter code: Sphingolipid long chain base-responsive protein PIL1 (339 aa).

Positions 1–19 are enriched in polar residues; it reads MHRTYSLRNSRAPTASQLQ. The interval 1-31 is disordered; sequence MHRTYSLRNSRAPTASQLQNPPPPPSTTKGR. At threonine 14 the chain carries Phosphothreonine. Phosphoserine is present on serine 16. Lysine 29 is covalently cross-linked (Glycyl lysine isopeptide (Lys-Gly) (interchain with G-Cter in ubiquitin)). Residues serine 45, serine 98, serine 163, and serine 230 each carry the phosphoserine modification. Threonine 233 carries the post-translational modification Phosphothreonine. Residues 273–339 are disordered; sequence SFKQDYEDFE…SESLPQQTTA (67 aa). Acidic residues predominate over residues 279 to 293; that stretch reads EDFEPEEGEEEEEED. Serine 299 carries the post-translational modification Phosphoserine. Over residues 301–318 the composition is skewed to acidic residues; sequence DEQEDGQIEEPEQEEEGA. Over residues 326–339 the composition is skewed to polar residues; it reads GHQQSESLPQQTTA.

Post-translationally, phosphorylated by PKH1 and PKH2. Phosphorylation is inhibited by sphingolipid long chain bases (LCBs).

It localises to the lipid droplet. Functionally, negative regulator of cell wall integrity (CWI) in unstressed cells, probably by inhibiting protein kinase PKH1/PHK2 activity and regulating their downstream CWI pathways PKC1-MAP kinase pathway and protein kinase YPK1 pathway. Activity may be regulated by the transient increase of sphingolipid long chain bases (LCBs) during heat stress. This chain is Sphingolipid long chain base-responsive protein PIL1 (PIL1), found in Saccharomyces cerevisiae (strain ATCC 204508 / S288c) (Baker's yeast).